Reading from the N-terminus, the 461-residue chain is Aspartyl/glutamyl-tRNA(Asn/Gln) amidotransferase subunit B (461 aa).

The protein belongs to the GatB/GatE family. GatB subfamily. As to quaternary structure, heterotrimer of A, B and C subunits.

It catalyses the reaction L-glutamyl-tRNA(Gln) + L-glutamine + ATP + H2O = L-glutaminyl-tRNA(Gln) + L-glutamate + ADP + phosphate + H(+). It carries out the reaction L-aspartyl-tRNA(Asn) + L-glutamine + ATP + H2O = L-asparaginyl-tRNA(Asn) + L-glutamate + ADP + phosphate + 2 H(+). In terms of biological role, allows the formation of correctly charged Asn-tRNA(Asn) or Gln-tRNA(Gln) through the transamidation of misacylated Asp-tRNA(Asn) or Glu-tRNA(Gln) in organisms which lack either or both of asparaginyl-tRNA or glutaminyl-tRNA synthetases. The reaction takes place in the presence of glutamine and ATP through an activated phospho-Asp-tRNA(Asn) or phospho-Glu-tRNA(Gln). The sequence is that of Aspartyl/glutamyl-tRNA(Asn/Gln) amidotransferase subunit B from Methanopyrus kandleri (strain AV19 / DSM 6324 / JCM 9639 / NBRC 100938).